The chain runs to 278 residues: Large ribosomal subunit protein uL2 (278 aa).

The interval 223-278 (GVAMNPIDHPHGGGEGRTSGGRHPVTPWGFPTKGKKTRSNKRTDTFIVSSRHNRKK) is disordered.

It belongs to the universal ribosomal protein uL2 family. In terms of assembly, part of the 50S ribosomal subunit. Forms a bridge to the 30S subunit in the 70S ribosome.

Its function is as follows. One of the primary rRNA binding proteins. Required for association of the 30S and 50S subunits to form the 70S ribosome, for tRNA binding and peptide bond formation. It has been suggested to have peptidyltransferase activity; this is somewhat controversial. Makes several contacts with the 16S rRNA in the 70S ribosome. In Methylobacterium sp. (strain 4-46), this protein is Large ribosomal subunit protein uL2.